We begin with the raw amino-acid sequence, 332 residues long: Formamidase (332 aa).

The CN hydrolase domain maps to 14-259 (FLTALIQYPV…WEIVTAEVYP (246 aa)). Glu-60 serves as the catalytic Proton acceptor. Lys-132 (proton donor) is an active-site residue. The active-site Nucleophile is the Cys-165.

It belongs to the carbon-nitrogen hydrolase superfamily. Aliphatic amidase family.

The enzyme catalyses formamide + H2O = formate + NH4(+). In terms of biological role, is an aliphatic amidase with a restricted substrate specificity, as it only hydrolyzes formamide. This chain is Formamidase, found in Bacillus thuringiensis (strain Al Hakam).